The following is a 919-amino-acid chain: Isoleucine--tRNA ligase (919 aa).

Residues 57–67 (PYANGDIHMGT) carry the 'HIGH' region motif. L-isoleucyl-5'-AMP is bound at residue Glu-552. Positions 593 to 597 (KMSKS) match the 'KMSKS' region motif. Lys-596 lines the ATP pocket. 4 residues coordinate Zn(2+): Cys-886, Cys-889, Cys-906, and Cys-909.

It belongs to the class-I aminoacyl-tRNA synthetase family. IleS type 1 subfamily. As to quaternary structure, monomer. Zn(2+) serves as cofactor.

Its subcellular location is the cytoplasm. The enzyme catalyses tRNA(Ile) + L-isoleucine + ATP = L-isoleucyl-tRNA(Ile) + AMP + diphosphate. Functionally, catalyzes the attachment of isoleucine to tRNA(Ile). As IleRS can inadvertently accommodate and process structurally similar amino acids such as valine, to avoid such errors it has two additional distinct tRNA(Ile)-dependent editing activities. One activity is designated as 'pretransfer' editing and involves the hydrolysis of activated Val-AMP. The other activity is designated 'posttransfer' editing and involves deacylation of mischarged Val-tRNA(Ile). The chain is Isoleucine--tRNA ligase from Petrotoga mobilis (strain DSM 10674 / SJ95).